Here is a 2542-residue protein sequence, read N- to C-terminus: Unconventional myosin-IXa (2542 aa).

A Ras-associating domain is found at 14 to 112 (NEHTLRIYPG…YRFLLREKNL (99 aa)). Positions 146 to 1017 (KDFDDLCSLP…ERQHLQDLLH (872 aa)) constitute a Myosin motor domain. A helical transmembrane segment spans residues 175 to 195 (IYTYVGSILIAINPFKFLPIY). 239 to 246 (GESGSGKT) lines the ATP pocket. The residue at position 755 (serine 755) is a Phosphoserine. The interval 908 to 919 (QAEPYFVKCIRS) is actin-binding. 5 consecutive IQ domains span residues 1021 to 1041 (LRRI…QQFL), 1043 to 1072 (LRQA…EKDA), 1075 to 1104 (MASA…AAVI), 1116 to 1145 (RHKA…KIIL), and 1139 to 1168 (QRNK…EKLR). The tract at residues 1022–1163 (RRIVLLQRWF…RARQRCNALK (142 aa)) is neck or regulatory domain. The tail stretch occupies residues 1164–2505 (EEKLREAKLE…LKNVKNSPQK (1342 aa)). Residues 1221-1240 (RESSMDFSKESPDKQQERGR) are compositionally biased toward basic and acidic residues. The interval 1221-1276 (RESSMDFSKESPDKQQERGRRQSGTDLQEDVIVRQRPKSLEDLHQKKVGRAKRESR) is disordered. The residue at position 1243 (serine 1243) is a Phosphoserine. Residue threonine 1245 is modified to Phosphothreonine. The residue at position 1259 (serine 1259) is a Phosphoserine. Residues 1265-1292 (QKKVGRAKRESRRMRELEQAIFSLELLK) are a coiled coil. The segment covering 1266–1276 (KKVGRAKRESR) has biased composition (basic residues). Residues serine 1300 and serine 1318 each carry the phosphoserine modification. The segment at 1342-1401 (KSKPESLILDEGELKISSPNTFTNPKSQDNALSASSETSSTLAGKGASSDSEHLKNGTAK) is disordered. A compositionally biased stretch (polar residues) spans 1358–1371 (SSPNTFTNPKSQDN). Low complexity predominate over residues 1372 to 1384 (ALSASSETSSTLA). Over residues 1391-1401 (DSEHLKNGTAK) the composition is skewed to basic and acidic residues. The stretch at 1492–1539 (TVLKKLEKLNIEKEKRQKQLQQQNEKEMMEQIRQQTDILEKERKAFKT) forms a coiled coil. 4 disordered regions span residues 1650–1675 (RSTE…REGS), 1693–1727 (SGNP…SVDE), 1767–1793 (GKQG…PGPD), and 1806–1841 (QYHP…KRGV). Over residues 1665–1675 (HRSDDPSREGS) the composition is skewed to basic and acidic residues. Over residues 1715–1726 (QQETSQRFSSVD) the composition is skewed to polar residues. The span at 1821-1833 (CRKEFKENKEPSP) shows a compositional bias: basic and acidic residues. Position 1950 is a phosphoserine (serine 1950). 2 Phorbol-ester/DAG-type zinc fingers span residues 2001–2050 (GHIF…TAKC) and 2068–2119 (SRLT…DTDA). Residues 2065–2253 (VELSRLTSED…LIVVEQMNKY (189 aa)) form the Rho-GAP domain. Phosphoserine is present on residues serine 2293 and serine 2296. A coiled-coil region spans residues 2324–2360 (TDQQQAAMQQEEKVLTEQIENLQKEKEELTFEMLVLE). The tract at residues 2361-2443 (PRASDDETLE…NTTSSHGTRK (83 aa)) is disordered. The segment covering 2377–2386 (TADSSENLNM) has biased composition (polar residues). Over residues 2420–2438 (SLDSVSSSVSSCLSNTTSS) the composition is skewed to low complexity. Phosphoserine is present on serine 2458. The interval 2465-2530 (TEGPLGQAKS…TVDSDCSSTQ (66 aa)) is disordered.

Belongs to the TRAFAC class myosin-kinesin ATPase superfamily. Myosin family. In terms of processing, phosphorylated by ALPK1 following monosodium urate monohydrate (MSU)-induced inflammation. In terms of tissue distribution, expressed in the eye, lung, liver, brain, heart, kidney, skeletal muscle and spleen. No detection was found in liver. In the brain, expressed in the ependymal cells of the third ventricle and the aqueduct.

It localises to the membrane. Its subcellular location is the cytoplasm. The protein localises to the synapse. It is found in the cell projection. The protein resides in the growth cone. Myosins are actin-based motor molecules with ATPase activity. Unconventional myosins serve in intracellular movements. Regulates Rho by stimulating it's GTPase activity in neurons. Required for the regulation of neurite branching and motor neuron axon guidance. In Mus musculus (Mouse), this protein is Unconventional myosin-IXa (Myo9a).